Here is a 149-residue protein sequence, read N- to C-terminus: Large ribosomal subunit protein uL13 (149 aa).

The protein belongs to the universal ribosomal protein uL13 family. As to quaternary structure, part of the 50S ribosomal subunit.

In terms of biological role, this protein is one of the early assembly proteins of the 50S ribosomal subunit, although it is not seen to bind rRNA by itself. It is important during the early stages of 50S assembly. In Cyanothece sp. (strain PCC 7425 / ATCC 29141), this protein is Large ribosomal subunit protein uL13.